The chain runs to 427 residues: Trigger factor (427 aa).

The region spanning Gly163–Pro248 is the PPIase FKBP-type domain.

It belongs to the FKBP-type PPIase family. Tig subfamily.

The protein resides in the cytoplasm. It catalyses the reaction [protein]-peptidylproline (omega=180) = [protein]-peptidylproline (omega=0). Involved in protein export. Acts as a chaperone by maintaining the newly synthesized protein in an open conformation. Functions as a peptidyl-prolyl cis-trans isomerase. This chain is Trigger factor, found in Enterococcus faecalis (strain ATCC 700802 / V583).